A 590-amino-acid chain; its full sequence is Putative sodium/calcium exchanger 6 (590 aa).

The signal sequence occupies residues 1-19; the sequence is MRIHFFAFLIILSLVGCDG. Transmembrane regions (helical) follow at residues 97–117, 139–159, 173–193, 208–228, 230–250, 368–388, 397–417, 440–460, 499–519, 535–555, and 568–588; these read IILI…VSSA, VAGV…GAIA, LGEL…VTIF, IAFY…YDHV, IWMP…VILS, PITL…IQVC, PGLW…VLFF, IAWI…LGVV, AAAI…PFTI, YRLL…AMFA, and LVFI…DILV.

The protein belongs to the Ca(2+):cation antiporter (CaCA) (TC 2.A.19) family.

The protein resides in the membrane. In Caenorhabditis elegans, this protein is Putative sodium/calcium exchanger 6 (ncx-6).